The primary structure comprises 113 residues: Transcriptional activator RamA (113 aa).

Positions 9–107 constitute an HTH araC/xylS-type domain; it reads DTIVEWIDDN…HQPPGAYRKE (99 aa). 2 consecutive DNA-binding regions (H-T-H motif) follow at residues 26–47 and 74–97; these read EDIA…LQYK and VYEI…TRTF.

Functionally, probable transcriptional activator. This is Transcriptional activator RamA (ramA) from Enterobacter cloacae.